The primary structure comprises 190 residues: Crossover junction endodeoxyribonuclease RuvC (190 aa).

Residues Asp-8, Glu-67, and Asp-139 contribute to the active site. Positions 8, 67, and 139 each coordinate Mg(2+).

Belongs to the RuvC family. As to quaternary structure, homodimer which binds Holliday junction (HJ) DNA. The HJ becomes 2-fold symmetrical on binding to RuvC with unstacked arms; it has a different conformation from HJ DNA in complex with RuvA. In the full resolvosome a probable DNA-RuvA(4)-RuvB(12)-RuvC(2) complex forms which resolves the HJ. Mg(2+) is required as a cofactor.

Its subcellular location is the cytoplasm. It carries out the reaction Endonucleolytic cleavage at a junction such as a reciprocal single-stranded crossover between two homologous DNA duplexes (Holliday junction).. Its function is as follows. The RuvA-RuvB-RuvC complex processes Holliday junction (HJ) DNA during genetic recombination and DNA repair. Endonuclease that resolves HJ intermediates. Cleaves cruciform DNA by making single-stranded nicks across the HJ at symmetrical positions within the homologous arms, yielding a 5'-phosphate and a 3'-hydroxyl group; requires a central core of homology in the junction. The consensus cleavage sequence is 5'-(A/T)TT(C/G)-3'. Cleavage occurs on the 3'-side of the TT dinucleotide at the point of strand exchange. HJ branch migration catalyzed by RuvA-RuvB allows RuvC to scan DNA until it finds its consensus sequence, where it cleaves and resolves the cruciform DNA. The sequence is that of Crossover junction endodeoxyribonuclease RuvC from Haemophilus influenzae (strain PittGG).